The following is a 341-amino-acid chain: UPF0283 membrane protein VV2076 (341 aa).

A run of 4 helical transmembrane segments spans residues 64-84 (LAGG…VDSV), 93-113 (WLTL…LGAM), 207-227 (ESAA…LVAW), and 255-275 (LVLA…AGMD).

This sequence belongs to the UPF0283 family.

The protein resides in the cell inner membrane. The polypeptide is UPF0283 membrane protein VV2076 (Vibrio vulnificus (strain YJ016)).